The chain runs to 319 residues: Super small secreted glycoprotein (319 aa).

Residues 1–32 (MGGLSLLQLPRDKFRKSSFFVWVIILFQKAFS) form the signal peptide. A glycan (N-linked (GlcNAc...) asparagine; by host) is linked at N40. 2 cysteine pairs are disulfide-bonded: C108–C135 and C121–C147. N204, N208, N238, N257, and N268 each carry an N-linked (GlcNAc...) asparagine; by host glycan.

Belongs to the filoviruses glycoprotein family.

The protein resides in the secreted. In Sudan ebolavirus (strain Human/Uganda/Gulu/2000) (SEBOV), this protein is Super small secreted glycoprotein (GP).